Reading from the N-terminus, the 340-residue chain is Uroporphyrinogen decarboxylase (340 aa).

Residues 23-27 (RQAGR), aspartate 72, tyrosine 147, threonine 202, and histidine 316 each bind substrate.

The protein belongs to the uroporphyrinogen decarboxylase family. As to quaternary structure, homodimer.

Its subcellular location is the cytoplasm. It carries out the reaction uroporphyrinogen III + 4 H(+) = coproporphyrinogen III + 4 CO2. Its pathway is porphyrin-containing compound metabolism; protoporphyrin-IX biosynthesis; coproporphyrinogen-III from 5-aminolevulinate: step 4/4. Functionally, catalyzes the decarboxylation of four acetate groups of uroporphyrinogen-III to yield coproporphyrinogen-III. The chain is Uroporphyrinogen decarboxylase from Geobacter sulfurreducens (strain ATCC 51573 / DSM 12127 / PCA).